Consider the following 435-residue polypeptide: Histidine--tRNA ligase (435 aa).

It belongs to the class-II aminoacyl-tRNA synthetase family. Homodimer.

It is found in the cytoplasm. The catalysed reaction is tRNA(His) + L-histidine + ATP = L-histidyl-tRNA(His) + AMP + diphosphate + H(+). This is Histidine--tRNA ligase from Synechococcus elongatus (strain ATCC 33912 / PCC 7942 / FACHB-805) (Anacystis nidulans R2).